A 157-amino-acid polypeptide reads, in one-letter code: Large ribosomal subunit protein mL59 (157 aa).

Belongs to the mitochondrion-specific ribosomal protein mL59 family. Component of the mitochondrial large ribosomal subunit (mt-LSU). Mature yeast 74S mitochondrial ribosomes consist of a small (37S) and a large (54S) subunit. The 37S small subunit contains a 15S ribosomal RNA (15S mt-rRNA) and 34 different proteins. The 54S large subunit contains a 21S rRNA (21S mt-rRNA) and 46 different proteins.

The protein localises to the mitochondrion. In terms of biological role, component of the mitochondrial ribosome (mitoribosome), a dedicated translation machinery responsible for the synthesis of mitochondrial genome-encoded proteins, including at least some of the essential transmembrane subunits of the mitochondrial respiratory chain. The mitoribosomes are attached to the mitochondrial inner membrane and translation products are cotranslationally integrated into the membrane. The protein is Large ribosomal subunit protein mL59 (MRPL25) of Saccharomyces cerevisiae (strain ATCC 204508 / S288c) (Baker's yeast).